The chain runs to 380 residues: MKKIILLGATGSIGTQTLAIIRENPEKFQVVALSFGRNMERGRAIIKEFKPKMVAVWHTRDRVTLEAEFPNVKFFNGLEGLREVATYLDGDVLLNAVMGSVGLLPTLDAIEAGKAIAIANKETLVTAGHLVMRAAKEKNISLLPVDSEHSAILQALNGENTERIEKIILTASGGSFRDKTREQLSAVTVKEALKHPNWNMGNKLTIDSATMFNKGLEVMEAHWLFGVDYDDIEVVIQRESIIHSMVQFVDGSFIAQLGTPDMRMPIQYALTYPDRLYIPYEKEFRITDFSALHFEKVDYERFPALKLAYNAGKIGGTMPTVLNAANEIAVAGFLNGQVAFYNIEALVENAMNRHTSISNPDLDTILQVDQETRAYVKTLL.

Residues Thr10, Gly11, Ser12, Ile13, Gly36, Arg37, Asn38, and Asn120 each coordinate NADPH. Lys121 is a 1-deoxy-D-xylulose 5-phosphate binding site. Position 122 (Glu122) interacts with NADPH. Asp146 is a binding site for Mn(2+). 1-deoxy-D-xylulose 5-phosphate is bound by residues Ser147, Glu148, Ser172, and His195. Glu148 is a binding site for Mn(2+). Gly201 contributes to the NADPH binding site. 1-deoxy-D-xylulose 5-phosphate contacts are provided by Ser208, Asn213, Lys214, and Glu217. Residue Glu217 participates in Mn(2+) binding.

The protein belongs to the DXR family. The cofactor is Mg(2+). Mn(2+) is required as a cofactor.

It carries out the reaction 2-C-methyl-D-erythritol 4-phosphate + NADP(+) = 1-deoxy-D-xylulose 5-phosphate + NADPH + H(+). It functions in the pathway isoprenoid biosynthesis; isopentenyl diphosphate biosynthesis via DXP pathway; isopentenyl diphosphate from 1-deoxy-D-xylulose 5-phosphate: step 1/6. Its function is as follows. Catalyzes the NADPH-dependent rearrangement and reduction of 1-deoxy-D-xylulose-5-phosphate (DXP) to 2-C-methyl-D-erythritol 4-phosphate (MEP). The sequence is that of 1-deoxy-D-xylulose 5-phosphate reductoisomerase from Listeria monocytogenes serovar 1/2a (strain ATCC BAA-679 / EGD-e).